The sequence spans 115 residues: Ustilagic acid biosynthesis cluster protein orf3 (115 aa).

The N-terminal stretch at 1 to 38 is a signal peptide; that stretch reads MTYSKIACSLGKRGIARAPNQASSFFLLLFLFAKFSQQ. The disordered stretch occupies residues 42 to 62; sequence SPCLASSGVAKSRGPASTDRP.

The protein operates within secondary metabolite biosynthesis. Its function is as follows. Part of the gene cluster that mediates the biosynthesis of the glycolipid biosurfactant ustilagic acid (UA). UA is a secreted cellobiose glycolipid that is toxic for many microorganisms and confers biocontrol activity to U.maydis. UA consists of 15,16-dihydroxypalmitic or 2,15,16-trihydroxypalmitic acid, which is O-glycosidically linked to cellobiose at its terminal hydroxyl group. In addition, the cellobiose moiety is acetylated and acylated with a short-chain hydroxy fatty acid. UA biosynthesis starts with omega-hydroxylation of palmitic acid catalyzed by the cytochrome P450 monooxygenase cyp1. Terminal hydroxylation of palmitic acid precedes subterminal hydroxylation catalyzed by the cytochrome P450 monooxygenase cyp2. Sequential glucosylation of the hydroxy fatty acid is probably catalyzed by the glycosyltransferase ugt1. The cellobiose lipid is further decorated by acetylation of the proximal glucose residue and by acylation with a short-chain beta-hydroxy fatty acid at the distal glucose residue. The acyltransferase uat1 may be a good candidate for catalyzing either acetylation or acylation of the cellobiose lipid. The fatty acid synthase fas2 may be involved in synthesis of the carbon backbone of the short-chain beta-hydroxy fatty acid esterified to the cellobiose disaccharide. The secreted UA consists of a mixture of both alpha-hydroxylated and non-hydroxylated glycolipids; therefore, alpha-hydroxylation of the long-chain fatty, catalyzed by the fatty acid hydroxylase ahd1, occurs late in UA biosynthesis and may be the last step before secretion. This Mycosarcoma maydis (Corn smut fungus) protein is Ustilagic acid biosynthesis cluster protein orf3.